A 307-amino-acid chain; its full sequence is Ribosomal RNA small subunit methyltransferase H (307 aa).

S-adenosyl-L-methionine is bound by residues Gly-32–His-34, Asp-52, Phe-78, Asp-100, and Gln-107.

The protein belongs to the methyltransferase superfamily. RsmH family.

Its subcellular location is the cytoplasm. The enzyme catalyses cytidine(1402) in 16S rRNA + S-adenosyl-L-methionine = N(4)-methylcytidine(1402) in 16S rRNA + S-adenosyl-L-homocysteine + H(+). Its function is as follows. Specifically methylates the N4 position of cytidine in position 1402 (C1402) of 16S rRNA. This is Ribosomal RNA small subunit methyltransferase H from Coxiella burnetii (strain CbuG_Q212) (Coxiella burnetii (strain Q212)).